Consider the following 202-residue polypeptide: Small ribosomal subunit protein uS4 (202 aa).

The disordered stretch occupies residues 15-43 (LGDLPGLTRKAAKRSNPPGQHGNARRKRS). An S4 RNA-binding domain is found at 90–152 (GRLDNVCFRL…KGSKKLAEGN (63 aa)).

Belongs to the universal ribosomal protein uS4 family. Part of the 30S ribosomal subunit. Contacts protein S5. The interaction surface between S4 and S5 is involved in control of translational fidelity.

Its function is as follows. One of the primary rRNA binding proteins, it binds directly to 16S rRNA where it nucleates assembly of the body of the 30S subunit. With S5 and S12 plays an important role in translational accuracy. This Prochlorococcus marinus (strain SARG / CCMP1375 / SS120) protein is Small ribosomal subunit protein uS4.